Consider the following 275-residue polypeptide: 2-dehydro-3-deoxyphosphooctonate aldolase (275 aa).

The protein belongs to the KdsA family.

The protein localises to the cytoplasm. It carries out the reaction D-arabinose 5-phosphate + phosphoenolpyruvate + H2O = 3-deoxy-alpha-D-manno-2-octulosonate-8-phosphate + phosphate. The protein operates within carbohydrate biosynthesis; 3-deoxy-D-manno-octulosonate biosynthesis; 3-deoxy-D-manno-octulosonate from D-ribulose 5-phosphate: step 2/3. Its pathway is bacterial outer membrane biogenesis; lipopolysaccharide biosynthesis. In Protochlamydia amoebophila (strain UWE25), this protein is 2-dehydro-3-deoxyphosphooctonate aldolase.